Consider the following 246-residue polypeptide: Ribonuclease 3 (246 aa).

The region spanning 10-135 (LENFLTLNNI…FVAAIYLDLG (126 aa)) is the RNase III domain. Glu50 serves as a coordination point for Mg(2+). Asp54 is a catalytic residue. The Mg(2+) site is built by Asp121 and Glu124. Glu124 is a catalytic residue. The DRBM domain occupies 161-230 (DPKSSFQEYI…ATRALETLKA (70 aa)).

Belongs to the ribonuclease III family. In terms of assembly, homodimer. The cofactor is Mg(2+).

It localises to the cytoplasm. It carries out the reaction Endonucleolytic cleavage to 5'-phosphomonoester.. Functionally, digests double-stranded RNA. Involved in the processing of primary rRNA transcript to yield the immediate precursors to the large and small rRNAs (23S and 16S). Processes some mRNAs, and tRNAs when they are encoded in the rRNA operon. Processes pre-crRNA and tracrRNA of type II CRISPR loci if present in the organism. This Mycoplasma mobile (strain ATCC 43663 / 163K / NCTC 11711) (Mesomycoplasma mobile) protein is Ribonuclease 3.